Here is a 238-residue protein sequence, read N- to C-terminus: Tetraspanin-4 (238 aa).

The Cytoplasmic portion of the chain corresponds to 1–13; that stretch reads MARGCLQGVKYLM. Residues 14–34 traverse the membrane as a helical segment; the sequence is FAFNLLFWLGGCGVLGVGIWL. At 35–55 the chain is on the extracellular side; that stretch reads AATQGNFATLSSSFPSLSAAN. A helical transmembrane segment spans residues 56–76; sequence LLIVTGTFVMAIGFVGCIGAL. Residues 77–85 are Cytoplasmic-facing; it reads KENKCLLLT. The chain crosses the membrane as a helical span at residues 86–106; it reads FFVLLLLVFLLEATIAVLFFA. Topologically, residues 107 to 201 are extracellular; the sequence is YSDKIDSYAQ…ETVKAWLQEN (95 aa). N-linked (GlcNAc...) asparagine glycosylation is found at Asn152 and Asn161. The chain crosses the membrane as a helical span at residues 202 to 222; it reads LLAVGIFGLCTALVQILGLTF. At 223 to 238 the chain is on the cytoplasmic side; the sequence is AMTMYCQVVKADTYCA.

This sequence belongs to the tetraspanin (TM4SF) family. In terms of assembly, forms a complex with integrins.

It localises to the membrane. The polypeptide is Tetraspanin-4 (Tspan4) (Mus musculus (Mouse)).